The following is a 590-amino-acid chain: Leucine-rich repeat transmembrane neuronal protein 4 (590 aa).

Positions 1–30 (MGFHLITQLKGMSVVLVLLPTLLLVMLTGA) are cleaved as a signal peptide. An LRRNT domain is found at 31–61 (QRACPKNCRCDGKIVYCESHAFADIPENISG). Residues 31–424 (QRACPKNCRC…QEYEHVSFHK (394 aa)) lie on the Extracellular side of the membrane. Residue Asn58 is glycosylated (N-linked (GlcNAc...) asparagine). 10 LRR repeats span residues 62–83 (GSQG…QFAG), 86–107 (QLIW…AFQG), 110–131 (RLKE…TFHP), 134–155 (NLRN…QFKG), 158–179 (KLII…VFQD), 182–203 (NLDF…AFAG), 206–226 (KLKE…AHFP), 230–251 (NLRS…LTWT), 254–275 (SLHN…TFKC), and 278–299 (NLQK…TVNA). Asn126 is a glycosylation site (N-linked (GlcNAc...) asparagine). The N-linked (GlcNAc...) asparagine glycan is linked to Asn291. In terms of domain architecture, LRRCT spans 311–362 (NMWECSRSICPLFYWLKNFKGNKESTMICAGPKHIQGEKVSDAVETYNICSE). A helical membrane pass occupies residues 425–445 (IIAGSVALFLSVAMILLVIYV). The Cytoplasmic segment spans residues 446–590 (SWKRYPASMK…PAIYLERIAN (145 aa)).

Belongs to the LRRTM family. Peripherally associated with AMPAR complex. AMPAR complex consists of an inner core made of 4 pore-forming GluA/GRIA proteins (GRIA1, GRIA2, GRIA3 and GRIA4) and 4 major auxiliary subunits arranged in a twofold symmetry. One of the two pairs of distinct binding sites is occupied either by CNIH2, CNIH3 or CACNG2, CACNG3. The other harbors CACNG2, CACNG3, CACNG4, CACNG8 or GSG1L. This inner core of AMPAR complex is complemented by outer core constituents binding directly to the GluA/GRIA proteins at sites distinct from the interaction sites of the inner core constituents. Outer core constituents include at least PRRT1, PRRT2, CKAMP44/SHISA9, FRRS1L and NRN1. The proteins of the inner and outer core serve as a platform for other, more peripherally associated AMPAR constituents, including LRRTM4. Alone or in combination, these auxiliary subunits control the gating and pharmacology of the AMPAR complex and profoundly impact their biogenesis and protein processing. In terms of tissue distribution, expressed in neuronal tissues.

The protein resides in the cell membrane. The protein localises to the postsynaptic cell membrane. May play a role in the development and maintenance of the vertebrate nervous system. Exhibits strong synaptogenic activity, restricted to excitatory presynaptic differentiation. This Homo sapiens (Human) protein is Leucine-rich repeat transmembrane neuronal protein 4 (LRRTM4).